A 244-amino-acid chain; its full sequence is Chlorosome protein I (244 aa).

The 2Fe-2S ferredoxin-type domain maps to 1-95 (MNLIINDKTA…TVKVLSRPEE (95 aa)). [2Fe-2S] cluster is bound by residues Cys-33, Cys-39, Cys-42, and Cys-77.

It depends on [2Fe-2S] cluster as a cofactor.

It is found in the chlorosome. Its function is as follows. Could play a direct role in the oxidation or reduction of the quenching species formed in the chlorosome. The polypeptide is Chlorosome protein I (csmI) (Chlorobaculum tepidum (strain ATCC 49652 / DSM 12025 / NBRC 103806 / TLS) (Chlorobium tepidum)).